The following is a 213-amino-acid chain: Ethylene-responsive transcription factor WIN1 (213 aa).

The segment at residues 15 to 72 is a DNA-binding region (AP2/ERF); the sequence is KFRGVRQRHWGSWVSEIRHPLLKRRVWLGTFETAEEAARAYDEAAVLMSGRNAKTNFP. Positions 70-80 are enriched in polar residues; sequence NFPIQRSSTGE. 2 disordered regions span residues 70 to 99 and 159 to 213; these read NFPI…GSST and ASTD…RFII. The span at 159–174 shows a compositional bias: low complexity; sequence ASTDAASQSTSATTAP.

It belongs to the AP2/ERF transcription factor family. ERF subfamily. As to expression, mostly expressed in roots, stems and anthers, and, to a lower extent, in leaves, seeds and silks.

The protein localises to the nucleus. Functionally, promotes cuticle formation by inducing the expression of enzymes involved in wax biosynthesis, particularly promoting very-long-chain waxes formation. Confers drought resistance. Acts as a transcriptional activator binding directly to promoter regions of CER2, CER3.2 and KCS1, wax biosynthesis-related genes. Binds to the GCC-box pathogenesis-related promoter element. May be involved in the regulation of gene expression by stress factors and by components of stress signal transduction pathways. The sequence is that of Ethylene-responsive transcription factor WIN1 from Zea mays (Maize).